Consider the following 668-residue polypeptide: BTB/POZ domain-containing protein At5g66560 (668 aa).

Residues 21–133 (SDIEIEVDDM…CYGVKMDLSA (113 aa)) enclose the BTB domain. Basic and acidic residues predominate over residues 73–84 (ETDKKGKGHEIE). A disordered region spans residues 73–98 (ETDKKGKGHEIEDDKEEEEVEEQEIE). Over residues 85–98 (DDKEEEEVEEQEIE) the composition is skewed to acidic residues. The 277-residue stretch at 254-530 (ELWFEDLTQL…VQVLFFEQLQ (277 aa)) folds into the NPH3 domain. Phosphotyrosine is present on Tyr-471.

This sequence belongs to the NPH3 family.

The protein operates within protein modification; protein ubiquitination. Functionally, may act as a substrate-specific adapter of an E3 ubiquitin-protein ligase complex (CUL3-RBX1-BTB) which mediates the ubiquitination and subsequent proteasomal degradation of target proteins. This is BTB/POZ domain-containing protein At5g66560 from Arabidopsis thaliana (Mouse-ear cress).